Reading from the N-terminus, the 199-residue chain is Large ribosomal subunit protein bL25 (199 aa).

The protein belongs to the bacterial ribosomal protein bL25 family. CTC subfamily. As to quaternary structure, part of the 50S ribosomal subunit; part of the 5S rRNA/L5/L18/L25 subcomplex. Contacts the 5S rRNA. Binds to the 5S rRNA independently of L5 and L18.

This is one of the proteins that binds to the 5S RNA in the ribosome where it forms part of the central protuberance. This chain is Large ribosomal subunit protein bL25, found in Caulobacter sp. (strain K31).